The primary structure comprises 208 residues: NADH-quinone oxidoreductase subunit I 2 (208 aa).

4Fe-4S ferredoxin-type domains are found at residues Ile79–Lys109 and Ser119–Ile148. Residues Cys88, Cys91, Cys94, Cys98, Cys128, Cys131, Cys134, and Cys138 each contribute to the [4Fe-4S] cluster site.

This sequence belongs to the complex I 23 kDa subunit family. NDH-1 is composed of 14 different subunits. Subunits NuoA, H, J, K, L, M, N constitute the membrane sector of the complex. [4Fe-4S] cluster serves as cofactor.

It is found in the cell inner membrane. The enzyme catalyses a quinone + NADH + 5 H(+)(in) = a quinol + NAD(+) + 4 H(+)(out). NDH-1 shuttles electrons from NADH, via FMN and iron-sulfur (Fe-S) centers, to quinones in the respiratory chain. The immediate electron acceptor for the enzyme in this species is believed to be ubiquinone. Couples the redox reaction to proton translocation (for every two electrons transferred, four hydrogen ions are translocated across the cytoplasmic membrane), and thus conserves the redox energy in a proton gradient. The protein is NADH-quinone oxidoreductase subunit I 2 of Aquifex aeolicus (strain VF5).